A 509-amino-acid chain; its full sequence is Cytochrome P450 monooxygenase aba1 (509 aa).

Positions 1–31 (MSNSILNLGSFACLLSLGSIVLWYTISAVLA) are cleaved as a signal peptide. A glycan (N-linked (GlcNAc...) asparagine) is linked at asparagine 402. Cysteine 451 is a binding site for heme. Residue asparagine 462 is glycosylated (N-linked (GlcNAc...) asparagine).

This sequence belongs to the cytochrome P450 family. Heme serves as cofactor.

Its pathway is hormone biosynthesis. In terms of biological role, cytochrome P450 monooxygenase; part of the gene cluster that mediates the biosynthesis of abscisic acid (ABA), a phytohormone that acts antagonistically toward salicylic acid (SA), jasmonic acid (JA) and ethylene (ETH) signaling, to impede plant defense responses. The first step of the pathway catalyzes the reaction from farnesyl diphosphate to alpha-ionylideneethane performed by the alpha-ionylideneethane synthase aba3 via a three-step reaction mechanism involving 2 neutral intermediates, beta-farnesene and allofarnesene. The cytochrome P450 monooxygenase aba1 might then be involved in the conversion of alpha-ionylideneethane to alpha-ionylideneacetic acid. Alpha-ionylideneacetic acid is further converted to abscisic acid in 2 steps involving the cytochrome P450 monooxygenase aba2 and the short-chain dehydrogenase/reductase aba4, via the intermediates 1'-deoxy-ABA or 1',4'-trans-diol-ABA, depending on the order of action of these 2 enzymes. Aba2 is responsible for the hydroxylation of carbon atom C-1' and aba4 might be involved in the oxidation of the C-4' carbon atom. The chain is Cytochrome P450 monooxygenase aba1 (aba1) from Botryotinia fuckeliana (strain B05.10) (Noble rot fungus).